Consider the following 88-residue polypeptide: Probable oxaloacetate decarboxylase gamma chain (88 aa).

The helical transmembrane segment at 13 to 35 (LMFSGMGFVIIFLLILIWAIGIV) threads the bilayer.

This sequence belongs to the OadG family. Heterotrimer of an alpha, a beta and a gamma subunit. The cofactor is Na(+).

Its subcellular location is the cell membrane. It carries out the reaction oxaloacetate + 2 Na(+)(in) + H(+) = pyruvate + 2 Na(+)(out) + CO2. Catalyzes the decarboxylation of oxaloacetate coupled to Na(+) translocation. This is Probable oxaloacetate decarboxylase gamma chain from Mannheimia succiniciproducens (strain KCTC 0769BP / MBEL55E).